Consider the following 611-residue polypeptide: Fatty acid photodecarboxylase, chloroplastic (611 aa).

The interval 1-22 (MMLGPKTVTRGATKGAAPRSMA) is disordered. The transit peptide at 1 to 36 (MMLGPKTVTRGATKGAAPRSMAARRVGGARRLSVRA) directs the protein to the chloroplast. Residues 55–56 (TA), glutamate 76, methionine 125, serine 129, and 133–136 (NATL) each bind FAD. The hexadecanoate site is built by cysteine 392, arginine 412, tyrosine 427, and glutamine 447. Glycine 582 provides a ligand contact to FAD.

The protein belongs to the GMC oxidoreductase family. Requires FAD as cofactor.

Its subcellular location is the plastid. The protein resides in the chloroplast. It catalyses the reaction a long-chain fatty acid + hnu + H(+) = a long-chain alkane + CO2. It carries out the reaction hnu + hexadecanoate + H(+) = pentadecane + CO2. Activated by blue light and repressed by red light. Functionally, catalyzes the decarboxylation of free fatty acids to n-alkanes or n-alkenes in response to blue light. Substrate preference is toward fatty acids with C17 or C18 chains. Saturated fatty acids are converted to alkanes, not alkenes. The decarboxylation is initiated through electron abstraction from the fatty acid by the photo-excited FAD. The sequence is that of Fatty acid photodecarboxylase, chloroplastic from Chlamydomonas reinhardtii (Chlamydomonas smithii).